The sequence spans 557 residues: Formate--tetrahydrofolate ligase (557 aa).

ATP is bound at residue 67 to 74 (TPAGEGKS).

This sequence belongs to the formate--tetrahydrofolate ligase family.

It carries out the reaction (6S)-5,6,7,8-tetrahydrofolate + formate + ATP = (6R)-10-formyltetrahydrofolate + ADP + phosphate. The protein operates within one-carbon metabolism; tetrahydrofolate interconversion. This is Formate--tetrahydrofolate ligase from Latilactobacillus sakei subsp. sakei (strain 23K) (Lactobacillus sakei subsp. sakei).